A 436-amino-acid chain; its full sequence is Cytochrome P450 monooxygenase phqO (436 aa).

Cys377 is a binding site for heme.

The protein belongs to the cytochrome P450 family. The cofactor is heme.

Its pathway is alkaloid biosynthesis. In terms of biological role, cytochrome P450 monooxygenase; part of the gene cluster that mediates the biosynthesis of paraherquamide, a fungal indole alkaloid that belongs to a family of natural products containing a characteristic bicyclo[2.2.2]diazaoctane core. The first steps in the biosynthesis of paraherquamide is the production of the beta-methyl-proline precursor from L-isoleucine. They require oxidation of a terminally hydroxylated L-isoleucine to the corresponding aldehyde by enzymes which have still to be identified. Spontaneous cyclization and dehydration would yield the 4-methyl pyrolline-5-carboxylic acid, which is then reduced by the pyrroline-5-carboxylate reductase phqD leading to the beta-methyl-proline precursor. The next step of paraherquamide biosynthesis involves coupling of beta-methyl-proline and L-tryptophan by the bimodular NRPS phqB, to produce a monooxopiperazine intermediate. The reductase (R) domain of phqB utilizes NADPH for hydride transfer to reduce the thioester bond of the T domain-tethered linear dipeptide to a hemithioaminal intermediate, which spontaneously cleaves the C-S bond to release the aldehyde product. This compound undergoes spontaneous cyclization and dehydration to give a dienamine which is reverse prenylated at C-2 by the reverse prenyltransferase phqJ. The other prenyltransferase present in the cluster, phqI may be a redundant gene in the pathway. During biosynthetic assembly, the key step to produce the polycyclic core is catalyzed by the bifunctional reductase and intramolecular [4+2] Diels-Alderase, phqE, resulting in formation of the [2.2.2] diazaoctane intermediate preparaherquamide. Following formation of preparaherquamide, an indole 2,3-epoxidation-initiated pinacol-like rearrangement is catalyzed by the phqK FAD-dependent monooxygenase. The prenyltransferase phqA, the cytochrome P450 monooxygenase phqL, and the FAD-linked oxidoreductase phqH (or the cytochrome P450 monooxygenase phqM), are proposed to be involved in the formation of the pyran ring. The FAD-dependent monooxygenase phqK is likely responsible for generation of the spiro-oxindole, and the N-methylation is likely mediated by the phqN methyltransferase leading to the isolable natural product paraherquamide F. However, the order of these biosynthetic steps has still to be determined. In late-stage paraherquamide biosynthesis, the third P450 monooxygenase, phqO, is probably responsible for the C-14 hydroxylation, transforming paraherquamide F to paraherquamide G, and paraherquamide E to the final product paraherquamide A. The expansion from the 6-membered ring pyran (in paraherquamides F and G) to the 7-membered dioxepin ring (in paraherquamides A and E) represents a poorly understood but intriguing process that probably involves the 2-oxoglutarate-dependent dioxygenase phqC. Finally, the remaining members of the paraherquamide cluster, including phqI as well as phqM (or phqH), do not have a clearly prescribed role and appear to be redundant. This Penicillium fellutanum protein is Cytochrome P450 monooxygenase phqO.